The sequence spans 156 residues: 6,7-dimethyl-8-ribityllumazine synthase (156 aa).

Residues F22, 57-59, and 81-83 contribute to the 5-amino-6-(D-ribitylamino)uracil site; these read AYE and TVI. Position 86-87 (86-87) interacts with (2S)-2-hydroxy-3-oxobutyl phosphate; sequence GT. The Proton donor role is filled by H89. F114 contributes to the 5-amino-6-(D-ribitylamino)uracil binding site. Residue R128 participates in (2S)-2-hydroxy-3-oxobutyl phosphate binding.

It belongs to the DMRL synthase family. Forms an icosahedral capsid composed of 60 subunits, arranged as a dodecamer of pentamers.

It carries out the reaction (2S)-2-hydroxy-3-oxobutyl phosphate + 5-amino-6-(D-ribitylamino)uracil = 6,7-dimethyl-8-(1-D-ribityl)lumazine + phosphate + 2 H2O + H(+). The protein operates within cofactor biosynthesis; riboflavin biosynthesis; riboflavin from 2-hydroxy-3-oxobutyl phosphate and 5-amino-6-(D-ribitylamino)uracil: step 1/2. In terms of biological role, catalyzes the formation of 6,7-dimethyl-8-ribityllumazine by condensation of 5-amino-6-(D-ribitylamino)uracil with 3,4-dihydroxy-2-butanone 4-phosphate. This is the penultimate step in the biosynthesis of riboflavin. The chain is 6,7-dimethyl-8-ribityllumazine synthase from Citrobacter koseri (strain ATCC BAA-895 / CDC 4225-83 / SGSC4696).